The following is a 201-amino-acid chain: uncharacterized protein (201 aa).

This is an uncharacterized protein from Cestrum yellow leaf curling virus (CmYLCV).